Here is a 552-residue protein sequence, read N- to C-terminus: Probable glucomannan 4-beta-mannosyltransferase 10 (552 aa).

A helical transmembrane segment spans residues 62–82 (IVPLFKCLVAFCLIISLLVFI). Residue aspartate 161 is part of the active site. Positions 220 and 222 each coordinate substrate. Aspartate 314 is an active-site residue. A run of 4 helical transmembrane segments spans residues 393-413 (IIVH…SVFF), 430-450 (ITLC…FWIL), 509-529 (EIMV…FGNT), and 530-550 (LLYL…VGFV).

It belongs to the glycosyltransferase 2 family. Plant cellulose synthase-like A subfamily.

Its subcellular location is the golgi apparatus membrane. The catalysed reaction is GDP-mannose + (glucomannan)n = GDP + (glucomannan)n+1.. Functionally, probable mannan synthase which consists of a 4-beta-mannosyltransferase activity on mannan using GDP-mannose. The beta-1,4-mannan product is the backbone for galactomannan synthesis by galactomannan galactosyltransferase. Galactomannan is a noncellulosic polysaccharides of plant cell wall. This is Probable glucomannan 4-beta-mannosyltransferase 10 from Arabidopsis thaliana (Mouse-ear cress).